Reading from the N-terminus, the 443-residue chain is MESLASLYKNHIATLQKRARDALARFKLDALLIHSGELFNVFLDDHPYPFKVNPQFKAWVPVTQVPNCWLLVDGVNKPKLWFYLPVDYWHNVEPLPTSFWTEDVEVIALPKADGIGSLLPAARGNIGYIGPVPERALQLGIEASNINPKGVIDYLHYYRSFKTEYELACMREAQKMAVNGHRAAEEAFRSGMSEFDINIAYLTATGHRDTDVPYSNIVALNEHAAVLHYTKLDHQAPEEMRSFLLDAGAEYNGYAADLTRTWSAKSDNDYAQLVKDVNDEQLALIATMKAGVSYVDYHIQFHQRIAKLLRKHQIITDMSEEAMVENDLTGPFMPHGIGHPLGLQVHDVAGFMQDDSGTHLAAPAKYPYLRCTRILQPGMVLTIEPGIYFIESLLAPWREGQFSKHFNWQKIEALKPFGGIRIEDNVVIHENNVENMTRDLKLA.

The Mn(2+) site is built by Asp-246, Asp-257, His-339, Glu-384, and Glu-423.

This sequence belongs to the peptidase M24B family. Bacterial-type prolidase subfamily. Requires Mn(2+) as cofactor.

The enzyme catalyses Xaa-L-Pro dipeptide + H2O = an L-alpha-amino acid + L-proline. Functionally, splits dipeptides with a prolyl residue in the C-terminal position. The polypeptide is Xaa-Pro dipeptidase (Escherichia fergusonii (strain ATCC 35469 / DSM 13698 / CCUG 18766 / IAM 14443 / JCM 21226 / LMG 7866 / NBRC 102419 / NCTC 12128 / CDC 0568-73)).